A 157-amino-acid polypeptide reads, in one-letter code: SsrA-binding protein (157 aa).

Residues 133-157 (HDKRNSIKEREGKREVERALKSRSR) are disordered.

The protein belongs to the SmpB family.

The protein localises to the cytoplasm. Required for rescue of stalled ribosomes mediated by trans-translation. Binds to transfer-messenger RNA (tmRNA), required for stable association of tmRNA with ribosomes. tmRNA and SmpB together mimic tRNA shape, replacing the anticodon stem-loop with SmpB. tmRNA is encoded by the ssrA gene; the 2 termini fold to resemble tRNA(Ala) and it encodes a 'tag peptide', a short internal open reading frame. During trans-translation Ala-aminoacylated tmRNA acts like a tRNA, entering the A-site of stalled ribosomes, displacing the stalled mRNA. The ribosome then switches to translate the ORF on the tmRNA; the nascent peptide is terminated with the 'tag peptide' encoded by the tmRNA and targeted for degradation. The ribosome is freed to recommence translation, which seems to be the essential function of trans-translation. The polypeptide is SsrA-binding protein (Verminephrobacter eiseniae (strain EF01-2)).